The chain runs to 152 residues: Protein Turandot X (152 aa).

The N-terminal stretch at 1-22 is a signal peptide; sequence MGFYISSLLICVFLGIVRFASA.

It belongs to the Turandot family.

It is found in the secreted. In terms of biological role, a humoral factor that may play a role in stress tolerance. This chain is Protein Turandot X, found in Drosophila erecta (Fruit fly).